Reading from the N-terminus, the 349-residue chain is Protein RecA (349 aa).

An ATP-binding site is contributed by 65-72 (GPESSGKT).

It belongs to the RecA family.

The protein localises to the cytoplasm. Its function is as follows. Can catalyze the hydrolysis of ATP in the presence of single-stranded DNA, the ATP-dependent uptake of single-stranded DNA by duplex DNA, and the ATP-dependent hybridization of homologous single-stranded DNAs. It interacts with LexA causing its activation and leading to its autocatalytic cleavage. The protein is Protein RecA of Azotobacter vinelandii (strain DJ / ATCC BAA-1303).